The following is a 269-amino-acid chain: GTP cyclohydrolase FolE2 (269 aa).

The protein belongs to the GTP cyclohydrolase IV family.

It carries out the reaction GTP + H2O = 7,8-dihydroneopterin 3'-triphosphate + formate + H(+). The protein operates within cofactor biosynthesis; 7,8-dihydroneopterin triphosphate biosynthesis; 7,8-dihydroneopterin triphosphate from GTP: step 1/1. Functionally, converts GTP to 7,8-dihydroneopterin triphosphate. This Burkholderia mallei (strain NCTC 10229) protein is GTP cyclohydrolase FolE2.